The primary structure comprises 233 residues: Uridylate kinase (233 aa).

9-10 (GS) is a binding site for ATP. Gly-43 lines the UMP pocket. ATP is bound by residues Gly-44 and Arg-48. Residues Asp-65 and 113 to 119 (VTPGQTT) contribute to the UMP site. ATP is bound by residues Thr-139, Tyr-145, and Asp-148.

It belongs to the UMP kinase family. As to quaternary structure, homohexamer.

It localises to the cytoplasm. The enzyme catalyses UMP + ATP = UDP + ADP. It participates in pyrimidine metabolism; CTP biosynthesis via de novo pathway; UDP from UMP (UMPK route): step 1/1. Inhibited by UTP. Its function is as follows. Catalyzes the reversible phosphorylation of UMP to UDP. The protein is Uridylate kinase of Methanosarcina acetivorans (strain ATCC 35395 / DSM 2834 / JCM 12185 / C2A).